The sequence spans 610 residues: Elongation factor 4 (610 aa).

Residues 14–196 enclose the tr-type G domain; the sequence is NRIRNFSIIA…ALVANIPPPK (183 aa). GTP-binding positions include 26–31 and 143–146; these read DHGKST and NKID.

Belongs to the TRAFAC class translation factor GTPase superfamily. Classic translation factor GTPase family. LepA subfamily.

The protein localises to the cell inner membrane. It catalyses the reaction GTP + H2O = GDP + phosphate + H(+). In terms of biological role, required for accurate and efficient protein synthesis under certain stress conditions. May act as a fidelity factor of the translation reaction, by catalyzing a one-codon backward translocation of tRNAs on improperly translocated ribosomes. Back-translocation proceeds from a post-translocation (POST) complex to a pre-translocation (PRE) complex, thus giving elongation factor G a second chance to translocate the tRNAs correctly. Binds to ribosomes in a GTP-dependent manner. The polypeptide is Elongation factor 4 (Legionella pneumophila (strain Lens)).